The chain runs to 96 residues: UPF0235 protein VC_0458 (96 aa).

It belongs to the UPF0235 family.

The chain is UPF0235 protein VC_0458 from Vibrio cholerae serotype O1 (strain ATCC 39315 / El Tor Inaba N16961).